The following is a 461-amino-acid chain: Anthranilate synthase component 1 (461 aa).

L-tryptophan-binding positions include S43 and P238–M240. G273 to T274 contributes to the chorismate binding site. E300 is a binding site for Mg(2+). Chorismate-binding positions include Y388, R408, G422–G424, and G424. Residue E437 participates in Mg(2+) binding.

It belongs to the anthranilate synthase component I family. Heterotetramer consisting of two non-identical subunits: a beta subunit (TrpG) and a large alpha subunit (TrpE). Mg(2+) serves as cofactor.

It catalyses the reaction chorismate + L-glutamine = anthranilate + pyruvate + L-glutamate + H(+). The protein operates within amino-acid biosynthesis; L-tryptophan biosynthesis; L-tryptophan from chorismate: step 1/5. Its activity is regulated as follows. Feedback inhibited by tryptophan. In terms of biological role, part of a heterotetrameric complex that catalyzes the two-step biosynthesis of anthranilate, an intermediate in the biosynthesis of L-tryptophan. In the first step, the glutamine-binding beta subunit (TrpG) of anthranilate synthase (AS) provides the glutamine amidotransferase activity which generates ammonia as a substrate that, along with chorismate, is used in the second step, catalyzed by the large alpha subunit of AS (TrpE) to produce anthranilate. In the absence of TrpG, TrpE can synthesize anthranilate directly from chorismate and high concentrations of ammonia. The chain is Anthranilate synthase component 1 (trpE) from Methanothermobacter marburgensis (strain ATCC BAA-927 / DSM 2133 / JCM 14651 / NBRC 100331 / OCM 82 / Marburg) (Methanobacterium thermoautotrophicum).